We begin with the raw amino-acid sequence, 319 residues long: tRNA uridine(34) hydroxylase (319 aa).

Positions 124 to 218 (LDEDTVILDA…YGKNEETKGE (95 aa)) constitute a Rhodanese domain. Cys178 serves as the catalytic Cysteine persulfide intermediate.

Belongs to the TrhO family.

The enzyme catalyses uridine(34) in tRNA + AH2 + O2 = 5-hydroxyuridine(34) in tRNA + A + H2O. In terms of biological role, catalyzes oxygen-dependent 5-hydroxyuridine (ho5U) modification at position 34 in tRNAs. The sequence is that of tRNA uridine(34) hydroxylase from Listeria welshimeri serovar 6b (strain ATCC 35897 / DSM 20650 / CCUG 15529 / CIP 8149 / NCTC 11857 / SLCC 5334 / V8).